The primary structure comprises 170 residues: ATP synthase subunit b (170 aa).

Residues 15 to 37 (LNLFETNVLNWAVVVFGLYKFLP) form a helical membrane-spanning segment.

This sequence belongs to the ATPase B chain family. F-type ATPases have 2 components, F(1) - the catalytic core - and F(0) - the membrane proton channel. F(1) has five subunits: alpha(3), beta(3), gamma(1), delta(1), epsilon(1). F(0) has four main subunits: a(1), b(1), b'(1) and c(10-14). The alpha and beta chains form an alternating ring which encloses part of the gamma chain. F(1) is attached to F(0) by a central stalk formed by the gamma and epsilon chains, while a peripheral stalk is formed by the delta, b and b' chains.

It is found in the cellular thylakoid membrane. Its function is as follows. F(1)F(0) ATP synthase produces ATP from ADP in the presence of a proton or sodium gradient. F-type ATPases consist of two structural domains, F(1) containing the extramembraneous catalytic core and F(0) containing the membrane proton channel, linked together by a central stalk and a peripheral stalk. During catalysis, ATP synthesis in the catalytic domain of F(1) is coupled via a rotary mechanism of the central stalk subunits to proton translocation. Component of the F(0) channel, it forms part of the peripheral stalk, linking F(1) to F(0). The polypeptide is ATP synthase subunit b (Prochlorococcus marinus (strain MIT 9515)).